Consider the following 102-residue polypeptide: uncharacterized protein (102 aa).

The disordered stretch occupies residues 79-102 (AELLHPSPAPMPPATHGRSAAPCS).

This is an uncharacterized protein from Homo sapiens (Human).